Reading from the N-terminus, the 860-residue chain is MYILVWKRGQQIKTFHTLDEAANFKAASNIDEAQMFSITVAPAISASGGSNEATNLRRLMYLSKSTNPEECNPQFLAEMARVATLRNREIGVSGFLMYSSPFFFQVIEGTDEDLDFLFAKISADPRHERCIVLANGPCTGRMYGDWHMKDSHIDSITTHPAMKTILYQIARSFSSMWSYLPKSAGNMLLLGKDPAAQPPEPMSVVVTFIYLVEFGSILSNPNLTEQAAEVLSTFVDVCVKNVEGSGGNIAKFITGICMAYWPINRTEDALNAIQQISEDLAQLRSQQAPGSAISLMYSQAGVHYGRAMLCNAGSRKSDFTLLGDCINTTSRIATLAKKLKTPLLFSFEVRCLLGDEMREEVEGAGMHQVKGRDKPVVVYQFPGPELDVEMVRQKIEHFTPGRFRCQMPVVEYESLPISQRPPIFDDTPKGKPRPRTPGYGGRQRSDSLVDRLIMIAKLAGPSISATGDSTLTTLTYISQATRPMSRLDLSAIMRTATRRNAQLSITGTLLYVNGLFVQTLEGPKDAMVNLYLKIRQDPRHTDVVTVHMAPIQERAYPAEWTLTSATEEMLATFPPLQDVLSQLAKSFTSLETYVPSTVVRYLTAGNNPRNLMPVSCGVVMLATDICSFTSLTEKSSLTEVWMICNTFIDACTSAICQEGGEVIKLIGDCVTAYFPGNGADSAVAAAQELFTFCRQLREAFVDVLDVRGCVSCGVGLDYGQVVMAQCGSLGLTEYVVAGAVSARVMEVESITREVGYAIVITEPVADRLSPQLRDHGIIPTPQAIEGLPCYGIAGEEFELDVDSIKRGIKALHAARSGEKPLALEPEEAKQDYRVSPGRMRHGDSGRRSNSAQGKRSTQVR.

Positions 56 to 149 (LRRLMYLSKS…GRMYGDWHMK (94 aa)) constitute a BLUF 1 domain. The Guanylate cyclase 1 domain maps to 205–333 (VVTFIYLVEF…DCINTTSRIA (129 aa)). Residues 420–443 (RPPIFDDTPKGKPRPRTPGYGGRQ) are disordered. The region spanning 471–563 (LTTLTYISQA…RAYPAEWTLT (93 aa)) is the BLUF 2 domain. The 130-residue stretch at 619 to 748 (VMLATDICSF…AVSARVMEVE (130 aa)) folds into the Guanylate cyclase 2 domain. The disordered stretch occupies residues 819–860 (KPLALEPEEAKQDYRVSPGRMRHGDSGRRSNSAQGKRSTQVR). Over residues 847–860 (RSNSAQGKRSTQVR) the composition is skewed to polar residues.

This sequence belongs to the adenylyl cyclase class-4/guanylyl cyclase family. In terms of assembly, heterotetramer of two alpha and two beta subunits. It depends on FAD as a cofactor.

Its subcellular location is the cell projection. The protein resides in the cilium. It localises to the flagellum. The enzyme catalyses ATP = 3',5'-cyclic AMP + diphosphate. Functionally, acts as a photoreceptor for the step-up photophobic response. The chain is Photoactivated adenylate cyclase subunit beta from Euglena longa (Euglenophycean alga).